Reading from the N-terminus, the 244-residue chain is Ribosome maturation factor RimM (244 aa).

The interval 1-58 (MSERDSGSSGPVKAKAAAPRAKTSGQAPFGAFVRKPVEKTEGKAKANAANAGSGATEM) is disordered. Residues 13 to 22 (KAKAAAPRAK) show a composition bias toward low complexity. The span at 35-44 (KPVEKTEGKA) shows a compositional bias: basic and acidic residues. Positions 45 to 57 (KANAANAGSGATE) are enriched in low complexity. Residues 163–244 (ADEFYWVDLL…QITVDWEADY (82 aa)) enclose the PRC barrel domain.

This sequence belongs to the RimM family. In terms of assembly, binds ribosomal protein uS19.

Its subcellular location is the cytoplasm. Its function is as follows. An accessory protein needed during the final step in the assembly of 30S ribosomal subunit, possibly for assembly of the head region. Essential for efficient processing of 16S rRNA. May be needed both before and after RbfA during the maturation of 16S rRNA. It has affinity for free ribosomal 30S subunits but not for 70S ribosomes. The chain is Ribosome maturation factor RimM from Paraburkholderia xenovorans (strain LB400).